Reading from the N-terminus, the 262-residue chain is MSRAAPFTVLIPARLASTRLPNKPLADIAGLPMVVHVARRASQSGAQRCVVAADDARIVQACQAHGVQALLTRADHASGSDRLAEACELLGLAGEDIVVNVQGDEPLIDPRLIDAVAALLHARGDASMGTAAHAIDSAEDFANPNVVKVVLDAQGLAHYFSRAPIPHARDHAPGSLWWQPGQTGVPVGFAPLRHIGIYSYRAGFLRRFPQLPAAPTEQLEALEQLRALWHGHRIAVHVTGSAPGAGVDTPADLERVRTLLGG.

It belongs to the KdsB family.

Its subcellular location is the cytoplasm. It catalyses the reaction 3-deoxy-alpha-D-manno-oct-2-ulosonate + CTP = CMP-3-deoxy-beta-D-manno-octulosonate + diphosphate. The protein operates within nucleotide-sugar biosynthesis; CMP-3-deoxy-D-manno-octulosonate biosynthesis; CMP-3-deoxy-D-manno-octulosonate from 3-deoxy-D-manno-octulosonate and CTP: step 1/1. It participates in bacterial outer membrane biogenesis; lipopolysaccharide biosynthesis. Functionally, activates KDO (a required 8-carbon sugar) for incorporation into bacterial lipopolysaccharide in Gram-negative bacteria. This Acidovorax sp. (strain JS42) protein is 3-deoxy-manno-octulosonate cytidylyltransferase.